An 873-amino-acid chain; its full sequence is Sister chromatid cohesion protein PDS5 homolog C (873 aa).

4 HEAT repeats span residues 53 to 92 (NALTPLMKGLVGGKLFKHSDVDVKVAVAACISEITRITAP), 99 to 136 (DQMKEVFKLIVSSFEDLVDKSSRSYAKRISILETVAKV), 149 to 187 (ALLIEMFQHFLKAIRDHHSGNVFSSMENIMTLVLEESED), and 189 to 227 (PSEMLSPILHSVKKDDEISQVSRRLAEQVLSNCASKLKT). Residues 266–301 (NEKEDSQGHIKRETEVEKAAEISTPERTDAPKDESG) show a composition bias toward basic and acidic residues. 2 disordered regions span residues 266–611 (NEKE…LVGS) and 658–873 (SPLD…KRKR). Thr-289 is subject to Phosphothreonine. Positions 303 to 319 (SGVSNGVAQQNDSSVDT) are enriched in polar residues. Over residues 320–334 (DSMKKQDDTGAKDEP) the composition is skewed to basic and acidic residues. A compositionally biased stretch (polar residues) spans 336–348 (QLDNPRNTDLNNT). Composition is skewed to basic and acidic residues over residues 349 to 365 (TEEKPDVEHQIEEKENE) and 373 to 394 (DLSKDSDIKEETEPAELLDSKD). Polar residues-rich tracts occupy residues 400-411 (PVDSSVTAATSS) and 418-438 (SVQILPSKTSGDETANVSSPS). A compositionally biased stretch (basic and acidic residues) spans 456-466 (KKKESSTEEVK). Positions 494–510 (KVASSSKTKPTVPPSKK) are enriched in low complexity. 2 stretches are compositionally biased toward basic and acidic residues: residues 511 to 526 (STSETKVAKQSEKKVV) and 535 to 555 (TKPKEEKKKPGRGKAIDEESL). A compositionally biased stretch (acidic residues) spans 661–681 (DESELSQDEEAADQTGQEEDA). Residues 701–725 (SSAKKGSGAGSSKAKATPASKSSKT) show a composition bias toward low complexity. Residues 726-746 (SQDDKTASKSKDSKEASREEE) are compositionally biased toward basic and acidic residues. The span at 747–757 (ASSEEESEEEE) shows a compositional bias: acidic residues. 2 stretches are compositionally biased toward low complexity: residues 795–814 (KATTSSKSKSGPVKSVPAKS) and 822–831 (KSGSASTPAS). Positions 844-853 (ETPKEPEPAT) are enriched in basic and acidic residues. Residues 854-866 (KAKSGKSQGSQSK) show a composition bias toward low complexity.

This sequence belongs to the PDS5 family. As to quaternary structure, interacts with the cohesin complex.

The protein localises to the nucleus. Functionally, cohesin cofactor dispensable during the meiotic division but playing an important role in DNA repair by homologous recombination (HR) probably by helping SMC5/SMC6 complex. Regulator of sister chromatid cohesion in mitosis which may stabilize cohesin complex association with chromatin. May couple sister chromatid cohesion during mitosis to DNA replication. Cohesion ensures that chromosome partitioning is accurate in both meiotic and mitotic cells and plays an important role in DNA repair. The chain is Sister chromatid cohesion protein PDS5 homolog C from Arabidopsis thaliana (Mouse-ear cress).